A 130-amino-acid chain; its full sequence is MIGQWNNGTGRRKSSVARVFLKKGSGKITINGKDIQSYFGRETSIMIARQPLALTNHVETFDIRINVYGGGESGQAGAARHGITRALIDYDAALKPALSQAGFVTRDAREVERKKVGLHSARRAKQFSKR.

This sequence belongs to the universal ribosomal protein uS9 family.

This chain is Small ribosomal subunit protein uS9, found in Verminephrobacter eiseniae (strain EF01-2).